A 381-amino-acid chain; its full sequence is Alcohol dehydrogenase class-3 (381 aa).

A Zn(2+)-binding site is contributed by C49. An NAD(+)-binding site is contributed by H50. An alcohol is bound by residues T51 and H71. Residues H71, E72, C101, C104, C107, C115, and C179 each coordinate Zn(2+). Residues 204–209 (GLGTVG), D228, K233, I274, 297–299 (VGV), 322–324 (TAF), and R374 each bind NAD(+).

It belongs to the zinc-containing alcohol dehydrogenase family. Class-III subfamily. In terms of assembly, homodimer. It depends on Zn(2+) as a cofactor. Expressed at low levels in the leaves.

It is found in the cytoplasm. The catalysed reaction is a primary alcohol + NAD(+) = an aldehyde + NADH + H(+). It carries out the reaction a secondary alcohol + NAD(+) = a ketone + NADH + H(+). The enzyme catalyses S-(hydroxymethyl)glutathione + NADP(+) = S-formylglutathione + NADPH + H(+). It catalyses the reaction S-(hydroxymethyl)glutathione + NAD(+) = S-formylglutathione + NADH + H(+). This is Alcohol dehydrogenase class-3 (FDH) from Zea mays (Maize).